Here is a 305-residue protein sequence, read N- to C-terminus: Foldase protein PrsA (305 aa).

The signal sequence occupies residues 1-19 (MKKWFIALAGLLLTVTLAG). A lipid anchor (N-palmitoyl cysteine) is attached at Cys20. Cys20 carries S-diacylglycerol cysteine lipidation. A PpiC domain is found at 136–235 (EPEVSVAHIL…YGYHVILMLK (100 aa)).

This sequence belongs to the PrsA family.

The protein localises to the cell membrane. It catalyses the reaction [protein]-peptidylproline (omega=180) = [protein]-peptidylproline (omega=0). Functionally, plays a major role in protein secretion by helping the post-translocational extracellular folding of several secreted proteins. This Levilactobacillus brevis (strain ATCC 367 / BCRC 12310 / CIP 105137 / JCM 1170 / LMG 11437 / NCIMB 947 / NCTC 947) (Lactobacillus brevis) protein is Foldase protein PrsA.